We begin with the raw amino-acid sequence, 179 residues long: Large ribosomal subunit protein uL6 (179 aa).

It belongs to the universal ribosomal protein uL6 family. In terms of assembly, part of the 50S ribosomal subunit.

Functionally, this protein binds to the 23S rRNA, and is important in its secondary structure. It is located near the subunit interface in the base of the L7/L12 stalk, and near the tRNA binding site of the peptidyltransferase center. In Chlorobaculum tepidum (strain ATCC 49652 / DSM 12025 / NBRC 103806 / TLS) (Chlorobium tepidum), this protein is Large ribosomal subunit protein uL6.